The primary structure comprises 1383 residues: Putative autophagy-related protein 11 (1383 aa).

2 coiled-coil regions span residues 16-49 (DKNN…YELN) and 117-324 (NLFL…QNKE). 2 stretches are compositionally biased toward basic and acidic residues: residues 1151-1224 (EEEK…EDRK) and 1233-1249 (HSSD…KTKE). The tract at residues 1151–1249 (EEEKKKNEEE…KYNKKEKTKE (99 aa)) is disordered.

It belongs to the ATG11 family.

Its function is as follows. Involved in cytoplasm to vacuole transport (Cvt), pexophagy, mitophagy and nucleophagy. Works as scaffold proteins that recruit ATG proteins to the pre-autophagosome (PAS), the site of vesicle/autophagosome formation. The sequence is that of Putative autophagy-related protein 11 from Plasmodium falciparum (isolate 3D7).